The primary structure comprises 183 residues: TATA-box-binding protein 1 (183 aa).

2 tandem repeats follow at residues 8-84 (IENV…AKKL) and 99-177 (VQNI…RQQL).

Belongs to the TBP family.

General factor that plays a role in the activation of archaeal genes transcribed by RNA polymerase. Binds specifically to the TATA box promoter element which lies close to the position of transcription initiation. The sequence is that of TATA-box-binding protein 1 from Methanosarcina acetivorans (strain ATCC 35395 / DSM 2834 / JCM 12185 / C2A).